We begin with the raw amino-acid sequence, 218 residues long: Hypoxanthine-guanine phosphoribosyltransferase (218 aa).

Ala-2 bears the N-acetylalanine mark. Residue Lys-69 participates in GMP binding. Lys-103 is subject to N6-acetyllysine. Lys-115 is covalently cross-linked (Glycyl lysine isopeptide (Lys-Gly) (interchain with G-Cter in SUMO1); alternate). Residue Lys-115 forms a Glycyl lysine isopeptide (Lys-Gly) (interchain with G-Cter in SUMO2); alternate linkage. GMP-binding positions include 134-142 (EDIIDTGKT), Lys-166, 186-188 (KFV), and Asp-194. Residue Asp-138 is the Proton acceptor of the active site. A Phosphothreonine modification is found at Thr-142. Asp-194 serves as a coordination point for Mg(2+).

Belongs to the purine/pyrimidine phosphoribosyltransferase family. Homotetramer. Requires Mg(2+) as cofactor.

The protein localises to the cytoplasm. The enzyme catalyses IMP + diphosphate = hypoxanthine + 5-phospho-alpha-D-ribose 1-diphosphate. It catalyses the reaction GMP + diphosphate = guanine + 5-phospho-alpha-D-ribose 1-diphosphate. It functions in the pathway purine metabolism; IMP biosynthesis via salvage pathway; IMP from hypoxanthine: step 1/1. Converts guanine to guanosine monophosphate, and hypoxanthine to inosine monophosphate. Transfers the 5-phosphoribosyl group from 5-phosphoribosylpyrophosphate onto the purine. Plays a central role in the generation of purine nucleotides through the purine salvage pathway. This Bos taurus (Bovine) protein is Hypoxanthine-guanine phosphoribosyltransferase (HPRT1).